Reading from the N-terminus, the 439-residue chain is Mitochondrial distribution and morphology protein 12 (439 aa).

One can recognise an SMP-LTD domain in the interval 1 to 439; the sequence is MSIDINWDTI…VYPSFWTFLV (439 aa). Disordered regions lie at residues 65–165 and 229–284; these read PLPD…PGAL and LTLT…HEKS. A compositionally biased stretch (acidic residues) spans 69–90; the sequence is FYEDDEDYPDEEGDEAENEAED. A compositionally biased stretch (basic and acidic residues) spans 109-121; sequence PSRDSQSRERGRG. The segment covering 229–243 has biased composition (polar residues); that stretch reads LTLTPQSHPDPTSRP.

Belongs to the MDM12 family. Component of the ER-mitochondria encounter structure (ERMES) or MDM complex, composed of MMM1, MDM10, mdm12 and MDM34. An MMM1 homodimer associates with one molecule of mdm12 on each side in a pairwise head-to-tail manner, and the SMP-LTD domains of MMM1 and mdm12 generate a continuous hydrophobic tunnel for phospholipid trafficking.

Its subcellular location is the mitochondrion outer membrane. The protein localises to the endoplasmic reticulum membrane. In terms of biological role, component of the ERMES/MDM complex, which serves as a molecular tether to connect the endoplasmic reticulum (ER) and mitochondria. Components of this complex are involved in the control of mitochondrial shape and protein biogenesis, and function in nonvesicular lipid trafficking between the ER and mitochondria. mdm12 is required for the interaction of the ER-resident membrane protein MMM1 and the outer mitochondrial membrane-resident beta-barrel protein MDM10. The mdm12-MMM1 subcomplex functions in the major beta-barrel assembly pathway that is responsible for biogenesis of all mitochondrial outer membrane beta-barrel proteins, and acts in a late step after the SAM complex. The MDM10-mdm12-MMM1 subcomplex further acts in the TOM40-specific pathway after the action of the mdm12-MMM1 complex. Essential for establishing and maintaining the structure of mitochondria and maintenance of mtDNA nucleoids. The polypeptide is Mitochondrial distribution and morphology protein 12 (Pyrenophora tritici-repentis (strain Pt-1C-BFP) (Wheat tan spot fungus)).